The following is a 244-amino-acid chain: tRNA (guanine-N(7)-)-methyltransferase (244 aa).

Glu-74, Glu-99, Asp-126, and Asp-149 together coordinate S-adenosyl-L-methionine. Asp-149 is a catalytic residue. Residues Lys-153, Asp-185, and 222–225 (TKFE) contribute to the substrate site.

This sequence belongs to the class I-like SAM-binding methyltransferase superfamily. TrmB family.

The enzyme catalyses guanosine(46) in tRNA + S-adenosyl-L-methionine = N(7)-methylguanosine(46) in tRNA + S-adenosyl-L-homocysteine. Its pathway is tRNA modification; N(7)-methylguanine-tRNA biosynthesis. Functionally, catalyzes the formation of N(7)-methylguanine at position 46 (m7G46) in tRNA. The protein is tRNA (guanine-N(7)-)-methyltransferase of Colwellia psychrerythraea (strain 34H / ATCC BAA-681) (Vibrio psychroerythus).